A 663-amino-acid chain; its full sequence is General transcription and DNA repair factor IIH subunit tcf-29 (663 aa).

BSD domains lie at 147-206 and 227-278; these read WFED…RAYA and ENGE…LSKK. Disordered regions lie at residues 452–491 and 513–535; these read DSDG…QHVG and HLTT…EERP. Residues 453–465 are compositionally biased toward basic and acidic residues; the sequence is SDGRGGIDLHRSI. Residues 515-528 are compositionally biased toward low complexity; that stretch reads TTTTTHGGSHTTTT.

The protein belongs to the TFB1 family. In terms of assembly, component of the 7-subunit TFIIH core complex composed of XPB/rad25, XPD/dnr-10, tcf-30/SSL1, tcf-29/TFB1, tcf-11/TFB2, tcf-14/TFB4 and rtf-1/TFB5, which is active in NER. The core complex associates with the 3-subunit CTD-kinase module TFIIK composed of div-66/cyclin H, prk-3/KIN28 and rtf-2/TFB3 to form the 10-subunit holoenzyme (holo-TFIIH) active in transcription.

It is found in the nucleus. In terms of biological role, component of the general transcription and DNA repair factor IIH (TFIIH) core complex, which is involved in general and transcription-coupled nucleotide excision repair (NER) of damaged DNA and, when complexed to TFIIK, in RNA transcription by RNA polymerase II. In NER, TFIIH acts by opening DNA around the lesion to allow the excision of the damaged oligonucleotide and its replacement by a new DNA fragment. In transcription, TFIIH has an essential role in transcription initiation. When the pre-initiation complex (PIC) has been established, TFIIH is required for promoter opening and promoter escape. Phosphorylation of the C-terminal tail (CTD) of the largest subunit of RNA polymerase II by the kinase module TFIIK controls the initiation of transcription. The protein is General transcription and DNA repair factor IIH subunit tcf-29 (tcf-29) of Neurospora crassa (strain ATCC 24698 / 74-OR23-1A / CBS 708.71 / DSM 1257 / FGSC 987).